Here is a 520-residue protein sequence, read N- to C-terminus: ATP synthase subunit alpha 2 (520 aa).

Residue 176 to 183 (GDRQTGKT) participates in ATP binding.

This sequence belongs to the ATPase alpha/beta chains family. As to quaternary structure, F-type ATPases have 2 components, CF(1) - the catalytic core - and CF(0) - the membrane proton channel. CF(1) has five subunits: alpha(3), beta(3), gamma(1), delta(1), epsilon(1). CF(0) has three main subunits: a(1), b(2) and c(9-12). The alpha and beta chains form an alternating ring which encloses part of the gamma chain. CF(1) is attached to CF(0) by a central stalk formed by the gamma and epsilon chains, while a peripheral stalk is formed by the delta and b chains.

It is found in the cell inner membrane. It carries out the reaction ATP + H2O + 4 H(+)(in) = ADP + phosphate + 5 H(+)(out). Produces ATP from ADP in the presence of a proton gradient across the membrane. The alpha chain is a regulatory subunit. The sequence is that of ATP synthase subunit alpha 2 from Polaromonas naphthalenivorans (strain CJ2).